Here is a 402-residue protein sequence, read N- to C-terminus: Putative RNA-guided DNA endonuclease (402 aa).

Residue D188 is part of the active site. The interval 202-239 (KITNPKHERRDRARLAKAQRDVSRKAKGSANRKKARRK) is disordered. Basic and acidic residues predominate over residues 204-225 (TNPKHERRDRARLAKAQRDVSR). A compositionally biased stretch (basic residues) spans 226–239 (KAKGSANRKKARRK). The active site involves E272. Zn(2+)-binding residues include C325, C328, C344, and C346. D353 is an active-site residue. The segment at 373 to 402 (GIRPQRESSRTGRSSVKQEPQRATAGIPRL) is disordered.

In the N-terminal section; belongs to the transposase 2 family. This sequence in the C-terminal section; belongs to the transposase 35 family.

An RNA-guided dsDNA endonuclease. When guided by an RNA derived from the right-end element of its insertion sequence element (IS), cleaves DNA downstream of the transposon-associated motif (TAM). Cleaves supercoiled and linear DNA in a staggered manner 15-21 bases from the TAM yielding 5'-overhangs. Binds reRNA, an approximately 150 nucleotide base sRNA derived from the 3' end of its own gene, the right end (RE) of the insertion sequence (IS) plus sequence downstream of the IS. The polypeptide is Putative RNA-guided DNA endonuclease (Streptomyces pristinaespiralis).